The sequence spans 198 residues: Ribonuclease HII (198 aa).

Residues 10–198 enclose the RNase H type-2 domain; that stretch reads QLVAGVDEVG…PVKRALGLAS (189 aa). Positions 16, 17, and 108 each coordinate a divalent metal cation.

Belongs to the RNase HII family. It depends on Mn(2+) as a cofactor. The cofactor is Mg(2+).

It is found in the cytoplasm. The catalysed reaction is Endonucleolytic cleavage to 5'-phosphomonoester.. In terms of biological role, endonuclease that specifically degrades the RNA of RNA-DNA hybrids. This is Ribonuclease HII from Shigella boydii serotype 4 (strain Sb227).